Reading from the N-terminus, the 260-residue chain is Acetylglutamate kinase (260 aa).

Substrate contacts are provided by residues 46–47, Arg68, and Asn160; that span reads GG.

It belongs to the acetylglutamate kinase family. ArgB subfamily.

The protein resides in the cytoplasm. The catalysed reaction is N-acetyl-L-glutamate + ATP = N-acetyl-L-glutamyl 5-phosphate + ADP. The protein operates within amino-acid biosynthesis; L-arginine biosynthesis; N(2)-acetyl-L-ornithine from L-glutamate: step 2/4. Functionally, catalyzes the ATP-dependent phosphorylation of N-acetyl-L-glutamate. The protein is Acetylglutamate kinase of Shewanella baltica (strain OS223).